We begin with the raw amino-acid sequence, 74 residues long: Antimicrobial peptide HsAp4 (74 aa).

Residues 1–21 form the signal peptide; sequence MSRRRILILVLVTMLVKTMAG. Residues 22-33 constitute a propeptide that is removed on maturation; the sequence is MESKWVETTYEI. R65 carries the arginine amide modification. The propeptide occupies 69 to 74; that stretch reads AISEQT.

Belongs to the non-disulfide-bridged peptide (NDBP) superfamily. Medium-length antimicrobial peptide (group 3) family. As to expression, expressed by the venom gland.

The protein localises to the secreted. It is found in the target cell membrane. Possesses antimicrobial activity against both Gram-negative and Gram-positive bacteria, as well as against the fungus C.tropicalis. Also possesses a relatively high hemolytic activity. May act by disrupting the integrity of the bacterial cell membrane. This is Antimicrobial peptide HsAp4 from Heterometrus spinifer (Asia giant forest scorpion).